A 405-amino-acid polypeptide reads, in one-letter code: MKNGIAECPACHSKLVSPGSKTISRAYDDHKIRVSSKQRVLNVLLVVGDCMLVGLQPVLVYMSKVDGKFNFSPISVNFLTEIAKVIFAIVMLLIQARHQKVGEKPLLSVSTFVQAARNNVLLAVPALLYAINNYLKFTMQLYFNPATVKMLSNLKVLVIAVLLKMVMKRRFSIIQWEALALLLIGISVNQLRSLPEGATAIGIPLATGAYVCTVIFVTVPSMASVFNEYALKSQYDTSIYLQNLFLYGYGAIFNFLGILGTVIYKGPGSFDILQGHSRATMFLILNNAAQGILSSFFFKYADTILKKYSSTVATIFTGIASAALFGHVITMNFLLGISIVFISMHQFFSPLAKARDEQQQNGNLELGNTKDTHRANESFINMAAGANEEASHRGESDDRTPLLPR.

The Cytoplasmic portion of the chain corresponds to 1 to 39 (MKNGIAECPACHSKLVSPGSKTISRAYDDHKIRVSSKQR). A helical membrane pass occupies residues 40–60 (VLNVLLVVGDCMLVGLQPVLV). At 61-73 (YMSKVDGKFNFSP) the chain is on the lumenal side. The chain crosses the membrane as a helical span at residues 74 to 94 (ISVNFLTEIAKVIFAIVMLLI). Topologically, residues 95-142 (QARHQKVGEKPLLSVSTFVQAARNNVLLAVPALLYAINNYLKFTMQLY) are cytoplasmic. The chain crosses the membrane as a helical span at residues 143-163 (FNPATVKMLSNLKVLVIAVLL). Topologically, residues 164 to 170 (KMVMKRR) are lumenal. Residues 171 to 191 (FSIIQWEALALLLIGISVNQL) traverse the membrane as a helical segment. At 192 to 199 (RSLPEGAT) the chain is on the cytoplasmic side. Residues 200-220 (AIGIPLATGAYVCTVIFVTVP) form a helical membrane-spanning segment. Residues 221–243 (SMASVFNEYALKSQYDTSIYLQN) are Lumenal-facing. A helical transmembrane segment spans residues 244-264 (LFLYGYGAIFNFLGILGTVIY). The Cytoplasmic portion of the chain corresponds to 265–280 (KGPGSFDILQGHSRAT). A helical transmembrane segment spans residues 281-301 (MFLILNNAAQGILSSFFFKYA). Residues 302-321 (DTILKKYSSTVATIFTGIAS) lie on the Lumenal side of the membrane. Residues 322–342 (AALFGHVITMNFLLGISIVFI) traverse the membrane as a helical segment. At 343 to 405 (SMHQFFSPLA…SDDRTPLLPR (63 aa)) the chain is on the cytoplasmic side. A disordered region spans residues 385–405 (GANEEASHRGESDDRTPLLPR). A compositionally biased stretch (basic and acidic residues) spans 389-405 (EASHRGESDDRTPLLPR).

Belongs to the nucleotide-sugar transporter family. CMP-Sialate:CMP antiporter (TC 2.A.7.12) subfamily.

It is found in the golgi apparatus membrane. In terms of biological role, sugar transporter involved in the transport of CMP-sialic acid from the cytoplasm into the Golgi. The polypeptide is CMP-sialic acid transporter 3 (UTR6) (Arabidopsis thaliana (Mouse-ear cress)).